The sequence spans 289 residues: Glucosamine-6-phosphate deaminase 1 (289 aa).

N6-acetyllysine is present on Lys-64. Asp-72 (proton acceptor; for enolization step) is an active-site residue. Asp-141 acts as the For ring-opening step in catalysis. His-143 serves as the catalytic Proton acceptor; for ring-opening step. Glu-148 functions as the For ring-opening step in the catalytic mechanism. A Phosphothreonine modification is found at Thr-161.

It belongs to the glucosamine/galactosamine-6-phosphate isomerase family. In terms of assembly, homohexamer. At the equatorial segment of the sperm head.

The protein resides in the cytoplasm. It carries out the reaction alpha-D-glucosamine 6-phosphate + H2O = beta-D-fructose 6-phosphate + NH4(+). Its pathway is nucleotide-sugar biosynthesis; UDP-N-acetyl-alpha-D-glucosamine biosynthesis; alpha-D-glucosamine 6-phosphate from D-fructose 6-phosphate: step 1/1. Allosterically activated by N-acetylglucosamine-6-phosphate (GlcNAc6P). Catalyzes the reversible conversion of alpha-D-glucosamine 6-phosphate (GlcN-6P) into beta-D-fructose 6-phosphate (Fru-6P) and ammonium ion, a regulatory reaction step in de novo uridine diphosphate-N-acetyl-alpha-D-glucosamine (UDP-GlcNAc) biosynthesis via hexosamine pathway. Deamination is coupled to aldo-keto isomerization mediating the metabolic flux from UDP-GlcNAc toward Fru-6P. At high ammonium level can drive amination and isomerization of Fru-6P toward hexosamines and UDP-GlcNAc synthesis. Has a role in fine tuning the metabolic fluctuations of cytosolic UDP-GlcNAc and their effects on hyaluronan synthesis that occur during tissue remodeling. Seems to trigger calcium oscillations in mammalian eggs. These oscillations serve as the essential trigger for egg activation and early development of the embryo. In Mesocricetus auratus (Golden hamster), this protein is Glucosamine-6-phosphate deaminase 1.